We begin with the raw amino-acid sequence, 160 residues long: Cytochrome b6-f complex subunit 4 (160 aa).

The next 3 membrane-spanning stretches (helical) occupy residues Leu-36 to Val-56, Leu-95 to Glu-115, and Leu-131 to Ile-151.

This sequence belongs to the cytochrome b family. PetD subfamily. In terms of assembly, the 4 large subunits of the cytochrome b6-f complex are cytochrome b6, subunit IV (17 kDa polypeptide, petD), cytochrome f and the Rieske protein, while the 4 small subunits are petG, petL, petM and petN. The complex functions as a dimer.

The protein localises to the plastid. Its subcellular location is the chloroplast thylakoid membrane. Component of the cytochrome b6-f complex, which mediates electron transfer between photosystem II (PSII) and photosystem I (PSI), cyclic electron flow around PSI, and state transitions. This is Cytochrome b6-f complex subunit 4 from Phaeodactylum tricornutum (strain CCAP 1055/1).